A 367-amino-acid chain; its full sequence is Uroporphyrinogen decarboxylase (367 aa).

Methionine 1 bears the N-acetylmethionine mark. Coproporphyrinogen I contacts are provided by arginine 37, alanine 39, arginine 41, arginine 50, aspartate 86, tyrosine 164, serine 219, and histidine 339. Residues arginine 37, alanine 39, and arginine 41 each coordinate coproporphyrinogen III. Coproporphyrinogen III contacts are provided by aspartate 86, tyrosine 164, serine 219, and histidine 339.

It belongs to the uroporphyrinogen decarboxylase family. As to quaternary structure, homodimer.

It localises to the cytoplasm. The protein resides in the cytosol. The enzyme catalyses uroporphyrinogen III + 4 H(+) = coproporphyrinogen III + 4 CO2. It catalyses the reaction uroporphyrinogen I + 4 H(+) = coproporphyrinogen I + 4 CO2. It functions in the pathway porphyrin-containing compound metabolism; protoporphyrin-IX biosynthesis; coproporphyrinogen-III from 5-aminolevulinate: step 4/4. Catalyzes the sequential decarboxylation of the four acetate side chains of uroporphyrinogen to form coproporphyrinogen and participates in the fifth step in the heme biosynthetic pathway. Isomer I or isomer III of uroporphyrinogen may serve as substrate, but only coproporphyrinogen III can ultimately be converted to heme. In vitro also decarboxylates pentacarboxylate porphyrinogen I. This Pongo abelii (Sumatran orangutan) protein is Uroporphyrinogen decarboxylase.